The chain runs to 181 residues: GMP synthase [glutamine-hydrolyzing] subunit A (181 aa).

Residues lysine 2–arginine 181 form the Glutamine amidotransferase type-1 domain. Catalysis depends on cysteine 72, which acts as the Nucleophile. Active-site residues include histidine 159 and glutamate 161.

As to quaternary structure, heterodimer composed of a glutamine amidotransferase subunit (A) and a GMP-binding subunit (B).

It carries out the reaction XMP + L-glutamine + ATP + H2O = GMP + L-glutamate + AMP + diphosphate + 2 H(+). It functions in the pathway purine metabolism; GMP biosynthesis; GMP from XMP (L-Gln route): step 1/1. Its function is as follows. Catalyzes the synthesis of GMP from XMP. In Methanothrix thermoacetophila (strain DSM 6194 / JCM 14653 / NBRC 101360 / PT) (Methanosaeta thermophila), this protein is GMP synthase [glutamine-hydrolyzing] subunit A.